Consider the following 133-residue polypeptide: Small ribosomal subunit protein uS8 (133 aa).

Belongs to the universal ribosomal protein uS8 family. In terms of assembly, part of the 30S ribosomal subunit. Contacts proteins S5 and S12.

Its function is as follows. One of the primary rRNA binding proteins, it binds directly to 16S rRNA central domain where it helps coordinate assembly of the platform of the 30S subunit. The protein is Small ribosomal subunit protein uS8 of Trichormus variabilis (strain ATCC 29413 / PCC 7937) (Anabaena variabilis).